Here is a 381-residue protein sequence, read N- to C-terminus: Putative acetyl-CoA C-acetyltransferase VraB (381 aa).

Cysteine 86 functions as the Acyl-thioester intermediate in the catalytic mechanism. Catalysis depends on histidine 338, which acts as the Proton acceptor.

Belongs to the thiolase-like superfamily. Thiolase family.

The chain is Putative acetyl-CoA C-acetyltransferase VraB (vraB) from Staphylococcus haemolyticus (strain JCSC1435).